The chain runs to 123 residues: Small ribosomal subunit protein uS12 (123 aa).

Position 89 is a 3-methylthioaspartic acid (Asp-89).

This sequence belongs to the universal ribosomal protein uS12 family. In terms of assembly, part of the 30S ribosomal subunit. Contacts proteins S8 and S17. May interact with IF1 in the 30S initiation complex.

Functionally, with S4 and S5 plays an important role in translational accuracy. Interacts with and stabilizes bases of the 16S rRNA that are involved in tRNA selection in the A site and with the mRNA backbone. Located at the interface of the 30S and 50S subunits, it traverses the body of the 30S subunit contacting proteins on the other side and probably holding the rRNA structure together. The combined cluster of proteins S8, S12 and S17 appears to hold together the shoulder and platform of the 30S subunit. This is Small ribosomal subunit protein uS12 from Rhodopseudomonas palustris (strain BisB18).